The chain runs to 260 residues: Thiazole synthase (260 aa).

The active-site Schiff-base intermediate with DXP is the lysine 100. 1-deoxy-D-xylulose 5-phosphate is bound by residues glycine 161, alanine 187 to glycine 188, and asparagine 209 to threonine 210.

The protein belongs to the ThiG family. In terms of assembly, homotetramer. Forms heterodimers with either ThiH or ThiS.

It is found in the cytoplasm. The enzyme catalyses [ThiS sulfur-carrier protein]-C-terminal-Gly-aminoethanethioate + 2-iminoacetate + 1-deoxy-D-xylulose 5-phosphate = [ThiS sulfur-carrier protein]-C-terminal Gly-Gly + 2-[(2R,5Z)-2-carboxy-4-methylthiazol-5(2H)-ylidene]ethyl phosphate + 2 H2O + H(+). The protein operates within cofactor biosynthesis; thiamine diphosphate biosynthesis. Functionally, catalyzes the rearrangement of 1-deoxy-D-xylulose 5-phosphate (DXP) to produce the thiazole phosphate moiety of thiamine. Sulfur is provided by the thiocarboxylate moiety of the carrier protein ThiS. In vitro, sulfur can be provided by H(2)S. The polypeptide is Thiazole synthase (Dechloromonas aromatica (strain RCB)).